An 816-amino-acid polypeptide reads, in one-letter code: Ribonucleoside-diphosphate reductase large subunit (816 aa).

The region spanning 1–92 is the ATP-cone domain; sequence MYVVKRDGRQ…VSNLHKNTKK (92 aa). Residues 5–6, 11–17, Thr53, and Asp57 each bind ATP; these read KR and ETVHFDK. GDP contacts are provided by Ser202 and Ser217. Cys218 and Cys444 are joined by a disulfide. DTTP-binding positions include 226-228, Lys243, Arg256, and 263-264; these read DSI and RG. Asn427 lines the GDP pocket. Asn427 serves as the catalytic Proton acceptor. Cys429 (cysteine radical intermediate) is an active-site residue. Residues Glu431 and 623–626 contribute to the GDP site; that span reads TAST. The Proton acceptor role is filled by Glu431.

The protein belongs to the ribonucleoside diphosphate reductase large chain family. Heterotetramer of two large/R1 and two small/R2 subunits. A radical transfer pathway may occur between 'Tyr-125' of protein R2 and R1. Contains a disulfide bonds. Binding of the substrate occurs primarily when the active-site cysteines are reduced. In terms of tissue distribution, highly expressed in actively growing tissues such as young leaves, shoot apices, inflorescences and carpels. Very low expression in cotyledons, adult and cauline leaves and senescent leaves.

Its subcellular location is the cytoplasm. The catalysed reaction is a 2'-deoxyribonucleoside 5'-diphosphate + [thioredoxin]-disulfide + H2O = a ribonucleoside 5'-diphosphate + [thioredoxin]-dithiol. With respect to regulation, under complex allosteric control mediated by deoxynucleoside triphosphates and ATP binding to separate specificity and activation sites on the large subunit. The type of nucleotide bound at the specificity site determines substrate preference. It seems probable that ATP makes the enzyme reduce CDP and UDP, dGTP favors ADP reduction and dTTP favors GDP reduction. Stimulated by ATP and inhibited by dATP binding to the activity site. Provides the precursors necessary for DNA synthesis. Catalyzes the biosynthesis of deoxyribonucleotides from the corresponding ribonucleotides. R1 contains the binding sites for both substrates and allosteric effectors and carries out the actual reduction of the ribonucleotide. Ribonucleotide reductase (RNR) complex function is essential for efficient organellar DNA degradation in pollen. Involved in chloroplast division. This Arabidopsis thaliana (Mouse-ear cress) protein is Ribonucleoside-diphosphate reductase large subunit.